The primary structure comprises 495 residues: Cornulin (495 aa).

Residues 49 to 84 (HDPATVDEVLRLLDEDHTGTVEFKEFLVLVFKVAQA) form the EF-hand domain. Residues Asp-62, Asp-64, Thr-66, Thr-68, and Glu-73 each contribute to the Ca(2+) site. Disordered stretches follow at residues 96–439 (ACGS…TVVG) and 460–481 (LHTSVSSAQGQDAAQSEEKRGI). The segment covering 99–110 (SQESGSLHSGAS) has biased composition (polar residues). Residues 137 to 151 (HRQSQQGSRGQNRPG) show a composition bias toward low complexity. Polar residues predominate over residues 152 to 194 (VQTQGQATGSAWVSSYDRQAESQSQERISPQIQLSGQTEQTQK). Basic and acidic residues predominate over residues 196-222 (GEGKRNQTTEMRPERQPQTREQDRAHQ). Low complexity predominate over residues 226 to 242 (TVTGSGTQTQAGATQTV). Polar residues-rich tracts occupy residues 243 to 282 (EQDSSHQTGRTSKQTQEATNDQNRGTETHGQGRSQTSQAV) and 290 to 303 (QAGTHTQTPTQTVE). Residues 307-324 (SHQTGSTSTQTQESTNGQ) are compositionally biased toward low complexity. Residues 334-355 (GRSQTSQAVTGGHTQIQAGSHT) are compositionally biased toward polar residues. Over residues 374-385 (QGQTQTQPGSGQ) the composition is skewed to low complexity. 2 stretches are compositionally biased toward polar residues: residues 403–420 (QAQTGASTESGRQEWSST) and 460–473 (LHTSVSSAQGQDAA).

The protein belongs to the S100-fused protein family. In terms of assembly, homodimer. As to expression, expressed in the basal skin layer (at protein level). Squamous epithelia cell-specific. Expressed in the esophagus (periphery of the cells of the granular and the upper spinous layers), foreskin (granular and lower cornified cells), scalp skin (granular layer), inner root sheath of the hair follicle and in primary keratinocytes (at protein level). Expressed in the squamous epithelium of the cervix, esophagus, foreskin and larynx. Expressed in the fetal bladder and scalp skin. Expressed at very low levels in the lung, kidney, uterus, skeletal muscle, heart and fetal brain. Undetectable or barely detectable in esophageal and oral squamous cell carcinoma compared with the matched adjacent normal esophageal mucosa. Undetectable or barely detectable in larynx and esophagus from patients with pH-documented laryngopharyngeal reflux (LPR).

The protein resides in the cytoplasm. In terms of biological role, promotes cell proliferation, G1/S cell cycle progression and induces expression of the cell cycle regulator CCND1. Regulates proliferation induced by pro-inflammatory cytokine response via activation of NFKB1 and PI3K/AKT signaling pathways. The protein is Cornulin (CRNN) of Homo sapiens (Human).